We begin with the raw amino-acid sequence, 138 residues long: Putative transcriptional regulatory protein NedR (138 aa).

A disordered region spans residues 1-25; that stretch reads MCWGRSWTFGRSSSKGWRPTSSASS. A compositionally biased stretch (polar residues) spans 9–25; it reads FGRSSSKGWRPTSSASS.

Functionally, may serve as a transcriptional regulator. In Micromonospora viridifaciens, this protein is Putative transcriptional regulatory protein NedR (nedR).